Reading from the N-terminus, the 132-residue chain is Translation initiation factor 5A (132 aa).

Hypusine is present on Lys36.

Belongs to the eIF-5A family.

It is found in the cytoplasm. Functionally, functions by promoting the formation of the first peptide bond. This is Translation initiation factor 5A (eIF5A) from Desulfurococcus amylolyticus (strain DSM 18924 / JCM 16383 / VKM B-2413 / 1221n) (Desulfurococcus kamchatkensis).